The following is a 147-amino-acid chain: Mitochondrial import receptor subunit TOM20 homolog (147 aa).

Residues Met-1–Val-3 are Mitochondrial intermembrane-facing. The helical transmembrane segment at Val-4 to Phe-26 threads the bilayer. The Cytoplasmic segment spans residues Asp-27 to Glu-147.

The protein belongs to the Tom20 family. Forms part of the preprotein translocase complex of the outer mitochondrial membrane (TOM complex). Interacts with tom22.

Its subcellular location is the mitochondrion outer membrane. In terms of biological role, central component of the receptor complex responsible for the recognition and translocation of cytosolically synthesized mitochondrial preproteins. Together with tom22 functions as the transit peptide receptor at the surface of the mitochondrion outer membrane and facilitates the movement of preproteins into the tom40 translocation pore. This is Mitochondrial import receptor subunit TOM20 homolog (tomm20) from Xenopus tropicalis (Western clawed frog).